The primary structure comprises 211 residues: Uracil phosphoribosyltransferase (211 aa).

5-phospho-alpha-D-ribose 1-diphosphate-binding positions include Arg-77, Arg-102, and 129 to 137; that span reads DPMLATGGS. Residues Ile-192 and 197-199 each bind uracil; that span reads GDA. 5-phospho-alpha-D-ribose 1-diphosphate is bound at residue Asp-198.

Belongs to the UPRTase family. It depends on Mg(2+) as a cofactor.

It carries out the reaction UMP + diphosphate = 5-phospho-alpha-D-ribose 1-diphosphate + uracil. Its pathway is pyrimidine metabolism; UMP biosynthesis via salvage pathway; UMP from uracil: step 1/1. Its activity is regulated as follows. Allosterically activated by GTP. Catalyzes the conversion of uracil and 5-phospho-alpha-D-ribose 1-diphosphate (PRPP) to UMP and diphosphate. The sequence is that of Uracil phosphoribosyltransferase from Corynebacterium glutamicum (strain R).